A 932-amino-acid polypeptide reads, in one-letter code: Protein translocase subunit SecA (932 aa).

ATP-binding positions include Gln-87, 105–109 (GEGKT), and Asp-515. Zn(2+) contacts are provided by Cys-916, Cys-918, Cys-927, and His-928.

The protein belongs to the SecA family. Monomer and homodimer. Part of the essential Sec protein translocation apparatus which comprises SecA, SecYEG and auxiliary proteins SecDF-YajC and YidC. The cofactor is Zn(2+).

The protein resides in the cell inner membrane. Its subcellular location is the cytoplasm. The enzyme catalyses ATP + H2O + cellular proteinSide 1 = ADP + phosphate + cellular proteinSide 2.. In terms of biological role, part of the Sec protein translocase complex. Interacts with the SecYEG preprotein conducting channel. Has a central role in coupling the hydrolysis of ATP to the transfer of proteins into and across the cell membrane, serving both as a receptor for the preprotein-SecB complex and as an ATP-driven molecular motor driving the stepwise translocation of polypeptide chains across the membrane. This is Protein translocase subunit SecA from Burkholderia orbicola (strain AU 1054).